We begin with the raw amino-acid sequence, 212 residues long: Putative tyrosine-protein phosphatase OCA1 (212 aa).

Residues 1-27 (MSNKDTSILKGNVDHEEADSNPKLRKI) are disordered. Over residues 12–22 (NVDHEEADSNP) the composition is skewed to basic and acidic residues. Residues 40 to 208 (NFCPVERQLY…SVEIDPSKVP (169 aa)) form the Tyrosine-protein phosphatase domain. The active-site Phosphocysteine intermediate is the cysteine 146.

Belongs to the protein-tyrosine phosphatase family.

The protein resides in the cytoplasm. The catalysed reaction is O-phospho-L-tyrosyl-[protein] + H2O = L-tyrosyl-[protein] + phosphate. In terms of biological role, putative tyrosine-protein phosphatase required for protection against superoxide stress. The protein is Putative tyrosine-protein phosphatase OCA1 (OCA1) of Scheffersomyces stipitis (strain ATCC 58785 / CBS 6054 / NBRC 10063 / NRRL Y-11545) (Yeast).